Here is a 166-residue protein sequence, read N- to C-terminus: Peptidyl-prolyl cis-trans isomerase cyp18 (166 aa).

In terms of domain architecture, PPIase cyclophilin-type spans 2 to 164 (STVELNTSAG…QPVVIESAKI (163 aa)).

The protein belongs to the cyclophilin-type PPIase family. Monomer.

The protein resides in the cytoplasm. The enzyme catalyses [protein]-peptidylproline (omega=180) = [protein]-peptidylproline (omega=0). With respect to regulation, inhibition by cyclosporin A with a Ki of 21 mu-mol. Functionally, PPIases accelerate the folding of proteins. It catalyzes the cis-trans isomerization of proline imidic peptide bonds in oligopeptides. This Streptomyces antibioticus protein is Peptidyl-prolyl cis-trans isomerase cyp18.